The primary structure comprises 345 residues: Dihydroorotase (345 aa).

The Zn(2+) site is built by histidine 13 and histidine 15. Residues 15–17 (HLR) and asparagine 41 contribute to the substrate site. 3 residues coordinate Zn(2+): lysine 99, histidine 136, and histidine 174. Position 99 is an N6-carboxylysine (lysine 99). Histidine 136 contributes to the substrate binding site. Leucine 219 is a binding site for substrate. A Zn(2+)-binding site is contributed by aspartate 247. The active site involves aspartate 247. The substrate site is built by histidine 251 and alanine 263.

This sequence belongs to the metallo-dependent hydrolases superfamily. DHOase family. Class II DHOase subfamily. In terms of assembly, homodimer. Zn(2+) serves as cofactor.

It carries out the reaction (S)-dihydroorotate + H2O = N-carbamoyl-L-aspartate + H(+). Its pathway is pyrimidine metabolism; UMP biosynthesis via de novo pathway; (S)-dihydroorotate from bicarbonate: step 3/3. In terms of biological role, catalyzes the reversible cyclization of carbamoyl aspartate to dihydroorotate. The sequence is that of Dihydroorotase from Acaryochloris marina (strain MBIC 11017).